A 275-amino-acid polypeptide reads, in one-letter code: MPELPEVETTLRGIAPHIEGKTVEAVVLRQLKLRWQINPDLGEILSGRQVLSCGRRAKYLIVRFQTGILLIHLGMSGSLRIFTPSDGRIGRSDRHDHVDIVFSDGTVMRYRDPRKFGAILWYEGIEEHHPLLEKLGPEPLSEAFCTDYLYVRLKAQKRAVKLALMDNAVVVGVGNIYANESLFRAGISPHRPANRLKKKECALLVETVKAVLRRAIETGGSTLRDFVDSDGKSGYFQQEYTVYGRHNQPCPQCGGLVVKETLGQRGTFYCPNCQK.

Residue Pro-2 is the Schiff-base intermediate with DNA of the active site. Glu-3 acts as the Proton donor in catalysis. The Proton donor; for beta-elimination activity role is filled by Lys-58. The DNA site is built by His-95 and Arg-114. The segment at 241–275 adopts an FPG-type zinc-finger fold; that stretch reads TVYGRHNQPCPQCGGLVVKETLGQRGTFYCPNCQK. The Proton donor; for delta-elimination activity role is filled by Arg-265.

Belongs to the FPG family. In terms of assembly, monomer. The cofactor is Zn(2+).

The catalysed reaction is Hydrolysis of DNA containing ring-opened 7-methylguanine residues, releasing 2,6-diamino-4-hydroxy-5-(N-methyl)formamidopyrimidine.. It carries out the reaction 2'-deoxyribonucleotide-(2'-deoxyribose 5'-phosphate)-2'-deoxyribonucleotide-DNA = a 3'-end 2'-deoxyribonucleotide-(2,3-dehydro-2,3-deoxyribose 5'-phosphate)-DNA + a 5'-end 5'-phospho-2'-deoxyribonucleoside-DNA + H(+). Functionally, involved in base excision repair of DNA damaged by oxidation or by mutagenic agents. Acts as a DNA glycosylase that recognizes and removes damaged bases. Has a preference for oxidized purines, such as 7,8-dihydro-8-oxoguanine (8-oxoG). Has AP (apurinic/apyrimidinic) lyase activity and introduces nicks in the DNA strand. Cleaves the DNA backbone by beta-delta elimination to generate a single-strand break at the site of the removed base with both 3'- and 5'-phosphates. The protein is Formamidopyrimidine-DNA glycosylase (mutM) of Neisseria meningitidis serogroup A / serotype 4A (strain DSM 15465 / Z2491).